Reading from the N-terminus, the 335-residue chain is Transaldolase (335 aa).

Ser2 carries the post-translational modification N-acetylserine. The Schiff-base intermediate with substrate role is filled by Lys144.

This sequence belongs to the transaldolase family. Type 1 subfamily. Homodimer.

The catalysed reaction is D-sedoheptulose 7-phosphate + D-glyceraldehyde 3-phosphate = D-erythrose 4-phosphate + beta-D-fructose 6-phosphate. It participates in carbohydrate degradation; pentose phosphate pathway; D-glyceraldehyde 3-phosphate and beta-D-fructose 6-phosphate from D-ribose 5-phosphate and D-xylulose 5-phosphate (non-oxidative stage): step 2/3. Transaldolase is important for the balance of metabolites in the pentose-phosphate pathway. In Saccharomyces cerevisiae (strain ATCC 204508 / S288c) (Baker's yeast), this protein is Transaldolase (TAL1).